The primary structure comprises 498 residues: ATP synthase subunit beta, chloroplastic (498 aa).

172–179 serves as a coordination point for ATP; sequence GGAGVGKT.

It belongs to the ATPase alpha/beta chains family. In terms of assembly, F-type ATPases have 2 components, CF(1) - the catalytic core - and CF(0) - the membrane proton channel. CF(1) has five subunits: alpha(3), beta(3), gamma(1), delta(1), epsilon(1). CF(0) has four main subunits: a(1), b(1), b'(1) and c(9-12).

The protein localises to the plastid. It localises to the chloroplast thylakoid membrane. The catalysed reaction is ATP + H2O + 4 H(+)(in) = ADP + phosphate + 5 H(+)(out). In terms of biological role, produces ATP from ADP in the presence of a proton gradient across the membrane. The catalytic sites are hosted primarily by the beta subunits. This chain is ATP synthase subunit beta, chloroplastic, found in Illicium oligandrum (Star anise).